We begin with the raw amino-acid sequence, 205 residues long: Large ribosomal subunit protein uL4 (205 aa).

A disordered region spans residues 65 to 99; sequence RQKGTGGARHGSRKSPTFRHGGVYKGPTPRSHGHD.

This sequence belongs to the universal ribosomal protein uL4 family. Part of the 50S ribosomal subunit.

One of the primary rRNA binding proteins, this protein initially binds near the 5'-end of the 23S rRNA. It is important during the early stages of 50S assembly. It makes multiple contacts with different domains of the 23S rRNA in the assembled 50S subunit and ribosome. In terms of biological role, forms part of the polypeptide exit tunnel. This Ruegeria pomeroyi (strain ATCC 700808 / DSM 15171 / DSS-3) (Silicibacter pomeroyi) protein is Large ribosomal subunit protein uL4.